Consider the following 125-residue polypeptide: Large ribosomal subunit protein bL12 (125 aa).

It belongs to the bacterial ribosomal protein bL12 family. As to quaternary structure, homodimer. Part of the ribosomal stalk of the 50S ribosomal subunit. Forms a multimeric L10(L12)X complex, where L10 forms an elongated spine to which 2 to 4 L12 dimers bind in a sequential fashion. Binds GTP-bound translation factors.

Its function is as follows. Forms part of the ribosomal stalk which helps the ribosome interact with GTP-bound translation factors. Is thus essential for accurate translation. This is Large ribosomal subunit protein bL12 from Variovorax paradoxus (strain S110).